We begin with the raw amino-acid sequence, 202 residues long: Small ribosomal subunit protein uS4 (202 aa).

The region spanning 94 to 157 (SRLDNLVYRM…KDLPIVAAGA (64 aa)) is the S4 RNA-binding domain.

This sequence belongs to the universal ribosomal protein uS4 family. In terms of assembly, part of the 30S ribosomal subunit. Contacts protein S5. The interaction surface between S4 and S5 is involved in control of translational fidelity.

One of the primary rRNA binding proteins, it binds directly to 16S rRNA where it nucleates assembly of the body of the 30S subunit. Its function is as follows. With S5 and S12 plays an important role in translational accuracy. This is Small ribosomal subunit protein uS4 from Malacoplasma penetrans (strain HF-2) (Mycoplasma penetrans).